The primary structure comprises 464 residues: Antithrombin-III (464 aa).

A signal peptide spans 1–32 (MYSNVIGTVTSGKRKVYLLSLLLIGFWDCVTC). Intrachain disulfides connect cysteine 40–cysteine 160 and cysteine 53–cysteine 127. Residue threonine 63 is modified to Phosphothreonine; by FAM20C. Serine 68 bears the Phosphoserine; by FAM20C mark. A heparin-binding site is contributed by tryptophan 81. Asparagine 128 carries an N-linked (GlcNAc...) asparagine glycan. Residue arginine 161 participates in heparin binding. Asparagine 167 carries an N-linked (GlcNAc...) asparagine glycan. Arginine 177 lines the heparin pocket. N-linked (GlcNAc...) (complex) asparagine glycosylation is present at asparagine 187. Asparagine 224 is a glycosylation site (N-linked (GlcNAc...) asparagine). A disulfide bridge connects residues cysteine 279 and cysteine 462.

This sequence belongs to the serpin family. In terms of assembly, forms protease inhibiting heterodimer with TMPRSS7. Post-translationally, phosphorylated by FAM20C in the extracellular medium. As to expression, found in plasma.

It is found in the secreted. The protein resides in the extracellular space. Most important serine protease inhibitor in plasma that regulates the blood coagulation cascade. AT-III inhibits thrombin, matriptase-3/TMPRSS7, as well as factors IXa, Xa and XIa. Its inhibitory activity is greatly enhanced in the presence of heparin. In Homo sapiens (Human), this protein is Antithrombin-III (SERPINC1).